Consider the following 288-residue polypeptide: CUF1-dependent copper transporter 1 (288 aa).

N-linked (GlcNAc...) asparagine glycosylation occurs at asparagine 18. A helical transmembrane segment spans residues 42–62; the sequence is MPSSAGATVGVCIGLFILAIF. 2 disordered regions span residues 106–125 and 154–180; these read PVLFNRRSSTKKEKDVYNPL and RESQEGSSAPSYAHSQQGQAQAQGSGV. The segment covering 158–167 has biased composition (polar residues); it reads EGSSAPSYAH. A compositionally biased stretch (low complexity) spans 168–177; it reads SQQGQAQAQG. A helical transmembrane segment spans residues 251–271; the sequence is LLMLVVMTFNIWWMISVVIGC.

The protein belongs to the copper transporter (Ctr) (TC 1.A.56) family. SLC31A subfamily. Interacts with the copper acquisition factor BIM1.

The protein resides in the cell membrane. Functionally, high affinity copper transporter involved in Cu(+) import into the cell upon copper-limitating conditions. Functions with BIM1 and probably also FRE4 and FRE7, where FRE4 and FRE7 metalloreductases liberate the Cu(2+) bound to the BIM1 copper-binding site for subsequent import of Cu(+) into the cell by CTR1, via the reduction of BIM1-bound Cu(2+) to Cu(+) to reduce binding affinity for BIM1 but increase affinity for CTR1. The BIM1-CTR1 pathway for copper uptake plays a key role in colonization in the brain where copper amounts are low and thus in cryptococcal meningitis. This chain is CUF1-dependent copper transporter 1, found in Cryptococcus neoformans var. grubii serotype A (strain H99 / ATCC 208821 / CBS 10515 / FGSC 9487) (Filobasidiella neoformans var. grubii).